The chain runs to 165 residues: Large ribosomal subunit protein uL15 (165 aa).

The interval 1 to 44 is disordered; the sequence is MSLNQLKAPRGANRAKKRVGRGQGSGLGKTAGRGGKGQKARSGN. A compositionally biased stretch (gly residues) spans 21–37; sequence RGQGSGLGKTAGRGGKG.

It belongs to the universal ribosomal protein uL15 family. In terms of assembly, part of the 50S ribosomal subunit.

In terms of biological role, binds to the 23S rRNA. In Anaeromyxobacter dehalogenans (strain 2CP-C), this protein is Large ribosomal subunit protein uL15.